Consider the following 60-residue polypeptide: Large ribosomal subunit protein uL30 (60 aa).

It belongs to the universal ribosomal protein uL30 family. As to quaternary structure, part of the 50S ribosomal subunit.

The sequence is that of Large ribosomal subunit protein uL30 from Acidovorax ebreus (strain TPSY) (Diaphorobacter sp. (strain TPSY)).